Consider the following 119-residue polypeptide: Large ribosomal subunit protein bL20 (119 aa).

It belongs to the bacterial ribosomal protein bL20 family.

In terms of biological role, binds directly to 23S ribosomal RNA and is necessary for the in vitro assembly process of the 50S ribosomal subunit. It is not involved in the protein synthesizing functions of that subunit. In Saccharophagus degradans (strain 2-40 / ATCC 43961 / DSM 17024), this protein is Large ribosomal subunit protein bL20.